The sequence spans 416 residues: Gamma-glutamyl phosphate reductase (416 aa).

Belongs to the gamma-glutamyl phosphate reductase family.

The protein resides in the cytoplasm. The enzyme catalyses L-glutamate 5-semialdehyde + phosphate + NADP(+) = L-glutamyl 5-phosphate + NADPH + H(+). It participates in amino-acid biosynthesis; L-proline biosynthesis; L-glutamate 5-semialdehyde from L-glutamate: step 2/2. Catalyzes the NADPH-dependent reduction of L-glutamate 5-phosphate into L-glutamate 5-semialdehyde and phosphate. The product spontaneously undergoes cyclization to form 1-pyrroline-5-carboxylate. The sequence is that of Gamma-glutamyl phosphate reductase from Leptospira interrogans serogroup Icterohaemorrhagiae serovar copenhageni (strain Fiocruz L1-130).